The chain runs to 120 residues: NAD(P)H-quinone oxidoreductase subunit 3, chloroplastic (120 aa).

The next 3 helical transmembrane spans lie at 9–29 (IFWA…LISG), 64–84 (MFAL…PWAM), and 88–108 (VLGV…IVGL).

This sequence belongs to the complex I subunit 3 family. In terms of assembly, NDH is composed of at least 16 different subunits, 5 of which are encoded in the nucleus.

Its subcellular location is the plastid. It is found in the chloroplast thylakoid membrane. It catalyses the reaction a plastoquinone + NADH + (n+1) H(+)(in) = a plastoquinol + NAD(+) + n H(+)(out). The enzyme catalyses a plastoquinone + NADPH + (n+1) H(+)(in) = a plastoquinol + NADP(+) + n H(+)(out). In terms of biological role, NDH shuttles electrons from NAD(P)H:plastoquinone, via FMN and iron-sulfur (Fe-S) centers, to quinones in the photosynthetic chain and possibly in a chloroplast respiratory chain. The immediate electron acceptor for the enzyme in this species is believed to be plastoquinone. Couples the redox reaction to proton translocation, and thus conserves the redox energy in a proton gradient. This is NAD(P)H-quinone oxidoreductase subunit 3, chloroplastic from Populus alba (White poplar).